Here is a 566-residue protein sequence, read N- to C-terminus: Beta-1,2-xylosyltransferease XAX1 (566 aa).

The segment at 1 to 25 (MTSTAYSRPSKLPGGGNGSDRRLPP) is disordered. The Cytoplasmic portion of the chain corresponds to 1–43 (MTSTAYSRPSKLPGGGNGSDRRLPPRLMRGLTTKIEPKKLGVG). A helical; Signal-anchor for type II membrane protein membrane pass occupies residues 44–64 (LLAGCCLALLTYVSLAKLFAI). The Lumenal segment spans residues 65–566 (YSPVFASTAN…LLQALDRLQQ (502 aa)). Asn-74 carries an N-linked (GlcNAc...) asparagine glycan. The tract at residues 78–180 (LMQNSPPSSP…AAGGDTKIKC (103 aa)) is disordered. Residues 84–94 (PSSPETGPIPP) are compositionally biased toward pro residues. Asn-104, Asn-368, Asn-429, Asn-515, and Asn-549 each carry an N-linked (GlcNAc...) asparagine glycan.

This sequence belongs to the glycosyltransferase 61 family. As to expression, highly expressed in young panicles.

The protein resides in the golgi apparatus membrane. It participates in glycan metabolism. Glycosyltransferase involved in the xylosylation of xylan, the major hemicellulose (non-cellulosic component) of primary and secondary walls of angiosperms. Possesses beta-1,2-xylosyltransferase activity, transferring xylose from UDP-xylose to the xylan backbone. This Oryza sativa subsp. japonica (Rice) protein is Beta-1,2-xylosyltransferease XAX1.